The primary structure comprises 529 residues: O-acetylstemmadenine oxidase (529 aa).

The first 23 residues, 1–23, serve as a signal peptide directing secretion; sequence MIKKVPIVLSIFCFLLLLSSSHG. Cysteines 32 and 92 form a disulfide. Residue Asn52 is glycosylated (N-linked (GlcNAc...) asparagine). Positions 70 to 244 constitute an FAD-binding PCMH-type domain; it reads KSPKPLAIIT…VSWKVKLVKV (175 aa). Residues 102 to 108, Ser113, 168 to 169, 173 to 177, and Phe183 contribute to the FAD site; these read IRSGGAD, VS, and GIGGH. The N-linked (GlcNAc...) asparagine glycan is linked to Asn293. Trp465 is an FAD binding site.

The protein belongs to the oxygen-dependent FAD-linked oxidoreductase family. FAD is required as a cofactor. As to expression, expressed in leaf epidermis.

It localises to the endoplasmic reticulum. Its subcellular location is the vacuole. It is found in the vesicle. It carries out the reaction O-acetyl-15alpha-stemmadenine + O2 = precondylocarpine acetate + H2O2. It participates in alkaloid biosynthesis. Functionally, component of the seco-iridoid and derivatives monoterpenoid indole alkaloids (MIAs, e.g. vinblastine, catharanthine, tabersonine, vincadifformine, vindoline, vincristine, quinine and strychnine) biosynthesis pathway. Converts O-acetylstemmadenine (OAS) to reactive acetylated intermediates, likely dihydroprecondylocarpine acetate. This is O-acetylstemmadenine oxidase from Catharanthus roseus (Madagascar periwinkle).